A 398-amino-acid chain; its full sequence is Phosphoglycerate kinase (398 aa).

Residues 21–23, arginine 36, 59–62, arginine 119, and arginine 157 each bind substrate; these read DFN and HLGR. ATP contacts are provided by residues lysine 208, glycine 296, glutamate 327, and 354–357; that span reads GGDS.

The protein belongs to the phosphoglycerate kinase family. In terms of assembly, monomer.

It is found in the cytoplasm. The enzyme catalyses (2R)-3-phosphoglycerate + ATP = (2R)-3-phospho-glyceroyl phosphate + ADP. The protein operates within carbohydrate degradation; glycolysis; pyruvate from D-glyceraldehyde 3-phosphate: step 2/5. The sequence is that of Phosphoglycerate kinase from Lactococcus lactis subsp. cremoris (strain MG1363).